Here is a 320-residue protein sequence, read N- to C-terminus: BTB and MATH domain-containing protein 36 (320 aa).

Residues 7 to 136 (KGSIRFEIQN…DKHAVLEVQI (130 aa)) enclose the MATH domain. The region spanning 160–227 (TDVVLVLEGK…IYPTHMLINS (68 aa)) is the BTB domain.

The polypeptide is BTB and MATH domain-containing protein 36 (bath-36) (Caenorhabditis elegans).